Consider the following 285-residue polypeptide: 4-diphosphocytidyl-2-C-methyl-D-erythritol kinase (285 aa).

Residue lysine 10 is part of the active site. An ATP-binding site is contributed by 93-103 (PIGGGLGGGSS). Residue aspartate 135 is part of the active site.

It belongs to the GHMP kinase family. IspE subfamily.

It carries out the reaction 4-CDP-2-C-methyl-D-erythritol + ATP = 4-CDP-2-C-methyl-D-erythritol 2-phosphate + ADP + H(+). It participates in isoprenoid biosynthesis; isopentenyl diphosphate biosynthesis via DXP pathway; isopentenyl diphosphate from 1-deoxy-D-xylulose 5-phosphate: step 3/6. Its function is as follows. Catalyzes the phosphorylation of the position 2 hydroxy group of 4-diphosphocytidyl-2C-methyl-D-erythritol. This chain is 4-diphosphocytidyl-2-C-methyl-D-erythritol kinase, found in Ruthia magnifica subsp. Calyptogena magnifica.